We begin with the raw amino-acid sequence, 181 residues long: Translation initiation factor IF-3, chloroplastic (181 aa).

This sequence belongs to the IF-3 family. Monomer.

It localises to the plastid. Its subcellular location is the chloroplast. In terms of biological role, IF-3 binds to the 30S ribosomal subunit and shifts the equilibrium between 70S ribosomes and their 50S and 30S subunits in favor of the free subunits, thus enhancing the availability of 30S subunits on which protein synthesis initiation begins. The polypeptide is Translation initiation factor IF-3, chloroplastic (Galdieria sulphuraria (Red alga)).